Consider the following 469-residue polypeptide: MTVKTRFAPSPTGFLHVGGARTALYSWLYARANQGEFVLRIEDTDLERSTPEACAAILEGMEWLNLNWDEGPYYQTKRFDRYNEIIVQMLEQGTAYKCYCSRERIDTMREEQAAKGEQQKYDGCCRDKAPRDTDEPFVVRFKNPTEGSVVFDDHVRGHIEFANSTLDDLIIARTEGTPTYNFCVVVDDWDMGITCVVRGEDHINNTPRQINILKALGAPVPEYAHVSMILGDDGAKLSKRHGAVGVMQYRDDGYLPEALLNYLVRLGWSHGDQEVFSIDEMKQFFSLDDINKAASAFNTDKLIWLNQHYIKELDPEYVASHLEWHMADQNIDTSNGPKLSEVVSALSERAKTLKELAASSRYFFEDFAEFDETAAKKHLRGVALEPLTLFQSKLAGLNEWTLEAIHQAIEDTAAELEVGMGKVGMPLRVAVTGAGMSPAVDLTIFLVGKVRAEQRISKAIEFVANRINS.

The short motif at 9–19 (PSPTGFLHVGG) is the 'HIGH' region element. Cys98, Cys100, Cys125, and Asp127 together coordinate Zn(2+). Positions 236-240 (KLSKR) match the 'KMSKS' region motif. Residue Lys239 participates in ATP binding.

This sequence belongs to the class-I aminoacyl-tRNA synthetase family. Glutamate--tRNA ligase type 1 subfamily. Monomer. It depends on Zn(2+) as a cofactor.

Its subcellular location is the cytoplasm. It carries out the reaction tRNA(Glu) + L-glutamate + ATP = L-glutamyl-tRNA(Glu) + AMP + diphosphate. In terms of biological role, catalyzes the attachment of glutamate to tRNA(Glu) in a two-step reaction: glutamate is first activated by ATP to form Glu-AMP and then transferred to the acceptor end of tRNA(Glu). This Shewanella woodyi (strain ATCC 51908 / MS32) protein is Glutamate--tRNA ligase.